Here is a 744-residue protein sequence, read N- to C-terminus: 3-isopropylmalate dehydratase (744 aa).

The [4Fe-4S] cluster site is built by Cys-341, Cys-401, and Cys-404.

The protein belongs to the aconitase/IPM isomerase family. As to quaternary structure, monomer. [4Fe-4S] cluster is required as a cofactor.

The enzyme catalyses (2R,3S)-3-isopropylmalate = (2S)-2-isopropylmalate. It functions in the pathway amino-acid biosynthesis; L-leucine biosynthesis; L-leucine from 3-methyl-2-oxobutanoate: step 2/4. Catalyzes the isomerization between 2-isopropylmalate and 3-isopropylmalate, via the formation of 2-isopropylmaleate. This Phycomyces blakesleeanus (strain ATCC 8743b / DSM 1359 / FGSC 10004 / NBRC 33097 / NRRL 1555) protein is 3-isopropylmalate dehydratase (leu1).